The primary structure comprises 378 residues: Mannitol-1-phosphate 5-dehydrogenase (378 aa).

4–15 (SVHFGAGNIGRG) contributes to the NAD(+) binding site.

Belongs to the mannitol dehydrogenase family.

The enzyme catalyses D-mannitol 1-phosphate + NAD(+) = beta-D-fructose 6-phosphate + NADH + H(+). This chain is Mannitol-1-phosphate 5-dehydrogenase, found in Streptococcus pneumoniae serotype 4 (strain ATCC BAA-334 / TIGR4).